Here is a 514-residue protein sequence, read N- to C-terminus: Beta-glucosidase 16 (514 aa).

The first 21 residues, 1 to 21 (MRGKFLSLLLLITLACIGVSA), serve as a signal peptide directing secretion. Residue Q49 participates in a beta-D-glucoside binding. The N-linked (GlcNAc...) asparagine glycan is linked to N80. A beta-D-glucoside is bound by residues H153 and 198–199 (NE). E199 acts as the Proton donor in catalysis. The cysteines at positions 218 and 226 are disulfide-linked. Y343 is an a beta-D-glucoside binding site. N357 carries N-linked (GlcNAc...) asparagine glycosylation. A beta-D-glucoside contacts are provided by residues E413, W458, 465 to 466 (EW), and F474. The active-site Nucleophile is the E413.

The protein belongs to the glycosyl hydrolase 1 family. Expressed at low levels in cauline leaves and flowers.

It catalyses the reaction Hydrolysis of terminal, non-reducing beta-D-glucosyl residues with release of beta-D-glucose.. The polypeptide is Beta-glucosidase 16 (Arabidopsis thaliana (Mouse-ear cress)).